A 410-amino-acid chain; its full sequence is Dipeptidase ataJ (410 aa).

His-27, Asp-29, and Glu-138 together coordinate Zn(2+). Residue His-165 coordinates substrate. Residues 180–200 (TSSPWSEYGGQTHDPGDEPSR) form a disordered region. 2 residues coordinate substrate: Arg-258 and Asp-318.

It belongs to the metallo-dependent hydrolases superfamily. Peptidase M19 family. Zn(2+) is required as a cofactor.

The enzyme catalyses an L-aminoacyl-L-amino acid + H2O = 2 an L-alpha-amino acid. Its pathway is mycotoxin biosynthesis. Functionally, dipeptidase; part of the gene cluster that mediates the biosynthesis of acetylaranotin, a member of the epipolythiodioxopiperazine (ETP) class of toxins characterized by a disulfide-bridged cyclic dipeptide. The first step of acetylaranotin biosynthesis is performed by the NRPS ataP which produces diketopiperazine cyclo-L-Phe-L-Phe via the condensation of 2 phenylalanines (L-Phe). The ataC domain of ataTC then catalyzes the formation of bishydroxylation of cyclo-L-Phe-L-Phe. The glutathione S-transferase domain ataG in ataIMG further catalyzes the conjugation of two glutathiones to the bishydroxylated intermediate. Next, the dipeptidase ataJ removes the Glu residues. The following step is performed by the carbon sulfur lyase domain ataI of ataIMG which may convert the bis-cysteinyl adduct to yield an epidithiol intermediate. The ataT domain from ataTC then catalyzes the oxidation of the free dithiols, followed by a cyclization step catalyzed by the cytochrome P450 ataF. AtaF probably acts as an epoxidase to promote a dual epoxidation formation at C8 and C9 along with C8' and C9', followed by the spontaneous nucleophilic attack of the amide nitrogens N10 and N10' to yield an intermediate with the pyrrolidine partial structure. The final steps of acetylaranotin biosynthesis involve the acetylation and ring rearrangement of an epitetrathiodiketopiperazine intermediate to produce acetylaranotin. AtaH probably catalyzes the acetylation of epitetrathiodiketopiperazine to produce a diacetate and ataY is responsible for the formation of the dihydrooxepin moiety that converts the diacetate intermediate to acetylaranotin via acetylapoaranotin. Both enzymes could function independently in the absence of the other. The acetylaranotin bis-thiomethyltransferase ataS located outside of acetylaranotin gene cluster is the main thiomethyltransferase responsible for converting acetylaranotin and its related intermediates to their methylated forms. This chain is Dipeptidase ataJ, found in Aspergillus terreus (strain NIH 2624 / FGSC A1156).